A 148-amino-acid polypeptide reads, in one-letter code: Ribose-5-P isomerase B (148 aa).

8–9 contacts D-ribulose 5-phosphate; sequence DE. Residue Cys-65 is the Proton acceptor of the active site. Residues 66-70, Asn-99, Arg-132, and Lys-136 contribute to the D-ribulose 5-phosphate site; that span reads GTGIG.

This sequence belongs to the LacAB/RpiB family.

The enzyme catalyses aldehydo-D-ribose 5-phosphate = D-ribulose 5-phosphate. Its pathway is carbohydrate degradation; pentose phosphate pathway; D-ribose 5-phosphate from D-ribulose 5-phosphate (non-oxidative stage): step 1/1. Catalyzes the interconversion of ribulose-5-P and ribose-5-P. The sequence is that of Ribose-5-P isomerase B from Listeria innocua serovar 6a (strain ATCC BAA-680 / CLIP 11262).